The primary structure comprises 337 residues: GTPase Obg (337 aa).

One can recognise an Obg domain in the interval Met1–Met159. Residues Ala160 to Ser323 enclose the OBG-type G domain. Residues Gly166–Ser173, Phe191–Val195, Asp213–Gly216, Thr280–Asp283, and Ser304–Val306 each bind GTP. Residues Ser173 and Thr193 each coordinate Mg(2+).

This sequence belongs to the TRAFAC class OBG-HflX-like GTPase superfamily. OBG GTPase family. As to quaternary structure, monomer. Requires Mg(2+) as cofactor.

It is found in the cytoplasm. Its function is as follows. An essential GTPase which binds GTP, GDP and possibly (p)ppGpp with moderate affinity, with high nucleotide exchange rates and a fairly low GTP hydrolysis rate. Plays a role in control of the cell cycle, stress response, ribosome biogenesis and in those bacteria that undergo differentiation, in morphogenesis control. This is GTPase Obg from Pelodictyon phaeoclathratiforme (strain DSM 5477 / BU-1).